The primary structure comprises 44 residues: Photosystem I reaction center subunit IX (44 aa).

A helical membrane pass occupies residues 7 to 27; it reads YLSAAPVLSTIWFGALAGLLI.

Belongs to the PsaJ family.

It is found in the plastid. It localises to the chloroplast thylakoid membrane. Its function is as follows. May help in the organization of the PsaE and PsaF subunits. The protein is Photosystem I reaction center subunit IX of Pelargonium hortorum (Common geranium).